Reading from the N-terminus, the 169-residue chain is Lipoprotein signal peptidase (169 aa).

4 helical membrane-spanning segments follow: residues 15–35 (WLWL…VVMN), 47–67 (ILPF…SFLS), 75–95 (WLFT…MSKL), and 107–127 (AMII…GFVV). Active-site residues include aspartate 128 and aspartate 146. Residues 141–161 (AFNLADMAICLGAAMIILDGF) form a helical membrane-spanning segment.

The protein belongs to the peptidase A8 family.

The protein resides in the cell inner membrane. It catalyses the reaction Release of signal peptides from bacterial membrane prolipoproteins. Hydrolyzes -Xaa-Yaa-Zaa-|-(S,diacylglyceryl)Cys-, in which Xaa is hydrophobic (preferably Leu), and Yaa (Ala or Ser) and Zaa (Gly or Ala) have small, neutral side chains.. It functions in the pathway protein modification; lipoprotein biosynthesis (signal peptide cleavage). Its function is as follows. This protein specifically catalyzes the removal of signal peptides from prolipoproteins. The protein is Lipoprotein signal peptidase of Vibrio parahaemolyticus serotype O3:K6 (strain RIMD 2210633).